The chain runs to 311 residues: Linearmycin resistance ATP-binding protein LnrL (311 aa).

In terms of domain architecture, ABC transporter spans 2–232; sequence LQAENIKKAY…LGGDTIIQLT (231 aa). 34–41 contacts ATP; sequence GPNGAGKS.

The protein belongs to the ABC transporter superfamily. As to quaternary structure, the complex is composed of two ATP-binding proteins (LnrL) and two transmembrane proteins (LnrM and LnrN).

Functionally, required for resistance to linearmycins, a family of antibiotic-specialized metabolites produced by some streptomycetes. Part of the ABC transporter complex LnrLMN that probably facilitates linearmycin removal from the membrane. Responsible for energy coupling to the transport system. Also mediates KinC-dependent biofilm morphology. This Bacillus subtilis (strain 168) protein is Linearmycin resistance ATP-binding protein LnrL.